The primary structure comprises 148 residues: Large ribosomal subunit protein bL9 (148 aa).

Belongs to the bacterial ribosomal protein bL9 family.

Binds to the 23S rRNA. The chain is Large ribosomal subunit protein bL9 from Chloroflexus aurantiacus (strain ATCC 29366 / DSM 635 / J-10-fl).